Consider the following 660-residue polypeptide: MSDSENEYDETDQLVKEEDEKMSDQRLTSEGADTSAEPKKKYDPKDPLRPRRKKARRACFACQRAHLTCGDERPCQRCIKRNLMESCQDGVRKKAKYLHDAPPEALRPVLGPNYNPNPTPRQNGHRHPSIQTSEASSNQGTFFSQSPATQFPLFSAAQTPIGNLAETLPFANQQSPTSPSFQTSGNPQISGMTVPQVSSPMTNFGTLPFDPSDPNIYNFNLEGLNFGSQYGAMEFGMLGHMSSGAAETPPGDATMARSASGSLGFGPGVFGNGVNQFDNVYEGNILDGFLGLDANHNGLYSQGNLQHGLPHAYAIAAGPTSIQSPSTDTNSPQPTPLGFEGSPTMATFSTTPGSKPANQQRPSTRQSNAIAKLGQQSVLGKRQRDPSFVYDTVKEPFGYVSSFHKLFILIQKRFTAAHTSRIAKSLASIRPSLMASTKNLTKQDLVFMEKYFQRSLLEYEEFMHQCSSPTLACRRTGEVAIVNKEFCALTGWTKDVLLGKEPNLNVNLGGSASANTNSKARVGLATPRLKSLNTESGGSTDGPRPVYLAELLDHESVVEFYEDYSQLAFNDSRGHKTRKCRLLKYRAPDKDDGTGESSTDGQLPQKDPRNSILSNRVAKIDGEHGISKLERDGKLECSYTWTIKRDVFDMPMLFVINVST.

The segment covering 1 to 12 (MSDSENEYDETD) has biased composition (acidic residues). Residues 1 to 52 (MSDSENEYDETDQLVKEEDEKMSDQRLTSEGADTSAEPKKKYDPKDPLRPRR) are disordered. Basic and acidic residues-rich tracts occupy residues 13–24 (QLVKEEDEKMSD) and 36–49 (AEPK…DPLR). The zn(2)-C6 fungal-type DNA-binding region spans 59–87 (CFACQRAHLTCGDERPCQRCIKRNLMESC). 3 disordered regions span residues 98-144 (LHDA…TFFS), 170-191 (FANQ…QISG), and 319-368 (PTSI…RQSN). Residues 129–144 (SIQTSEASSNQGTFFS) show a composition bias toward polar residues. The segment covering 173–184 (QQSPTSPSFQTS) has biased composition (low complexity). Polar residues-rich tracts occupy residues 320 to 332 (TSIQ…TNSP) and 344 to 368 (TMAT…RQSN). In terms of domain architecture, PAS spans 455–526 (SLLEYEEFMH…NSKARVGLAT (72 aa)). The disordered stretch occupies residues 587 to 613 (APDKDDGTGESSTDGQLPQKDPRNSIL).

It belongs to the ERT1/acuK family.

It localises to the nucleus. Transcription factor which regulates nonfermentable carbon utilization. Activator of gluconeogenetic genes. This chain is Transcription activator of gluconeogenesis CHGG_09150, found in Chaetomium globosum (strain ATCC 6205 / CBS 148.51 / DSM 1962 / NBRC 6347 / NRRL 1970) (Soil fungus).